Here is a 92-residue protein sequence, read N- to C-terminus: Sperm-specific protein Phi-1 (92 aa).

The segment at 1–92 (MPSPTRRSSK…RVRAKKKKKK (92 aa)) is disordered. Basic residues-rich tracts occupy residues 7 to 19 (RSSKSRSKSRSRS) and 29 to 92 (AAKR…KKKK).

In terms of tissue distribution, sperm.

It is found in the nucleus. Its subcellular location is the chromosome. Its function is as follows. Involved in nuclear basic protein transition: histones are replaced by spermatid specific proteins which are themselves replaced by protamines in late spermatids. The sequence is that of Sperm-specific protein Phi-1 from Mytilus edulis (Blue mussel).